A 76-amino-acid chain; its full sequence is Parvalbumin beta 3 (76 aa).

An N-acetylalanine modification is found at A1. In terms of domain architecture, EF-hand spans 31–66; it reads KSPEEVKKFFAIIDQDHSGFIEEEELKLFLQTFSAG. 6 residues coordinate Ca(2+): D44, D46, S48, F50, E52, and E55.

Belongs to the parvalbumin family.

In muscle, parvalbumin is thought to be involved in relaxation after contraction. It binds two calcium ions. This Merluccius polylepis (Southern hake) protein is Parvalbumin beta 3.